Consider the following 551-residue polypeptide: Glucose-6-phosphate isomerase (551 aa).

Residue Glu-352 is the Proton donor of the active site. Active-site residues include His-383 and Lys-511.

It belongs to the GPI family.

Its subcellular location is the cytoplasm. The enzyme catalyses alpha-D-glucose 6-phosphate = beta-D-fructose 6-phosphate. It participates in carbohydrate biosynthesis; gluconeogenesis. It functions in the pathway carbohydrate degradation; glycolysis; D-glyceraldehyde 3-phosphate and glycerone phosphate from D-glucose: step 2/4. In terms of biological role, catalyzes the reversible isomerization of glucose-6-phosphate to fructose-6-phosphate. The protein is Glucose-6-phosphate isomerase of Chlorobium luteolum (strain DSM 273 / BCRC 81028 / 2530) (Pelodictyon luteolum).